We begin with the raw amino-acid sequence, 106 residues long: Circadian clock oscillator protein KaiB (106 aa).

This sequence belongs to the KaiB family. In terms of assembly, the KaiABC complex composition changes during the circadian cycle to control KaiC phosphorylation. Complexes KaiC(6), KaiA(2-4):KaiC(6), KaiB(6):KaiC(6) and KaiC(6):KaiB(6):KaiA(12) are among the most important forms, many form cooperatively. Undergoes a major conformational rearrangment; in the free state forms homotetramers as a dimer of dimers. When bound to the CI domain of KaiC switches to a monomeric thioredoxin-fold (KaiB(fs)). KaiB(fs) binds CikA, leading it to dephosphorylate phospho-RpaA.

In terms of biological role, key component of the KaiABC oscillator complex, which constitutes the main circadian regulator in cyanobacteria. Complex composition changes during the circadian cycle to control KaiC phosphorylation. KaiA stimulates KaiC autophosphorylation, while KaiB sequesters KaiA, leading to KaiC autodephosphorylation. Phospho-Ser-431 KaiC accumulation triggers binding of KaiB to form the KaiB(6):KaiC(6) complex, leading to changes in output regulators CikA and SasA. KaiB switches to a thioredoxin-like fold (KaiB(fs)) when bound to KaiC. KaiB(6):KaiC(6) formation exposes a site for KaiA binding that sequesters KaiA from KaiC, making the KaiC(6):KaiB(6):KaiA(12) complex that results in KaiC autodephosphorylation. Functionally, a metamorphic protein which reversibly switches between an inactive tetrameric fold and a rare, thioredoxin-like monomeric fold (KaiB(fs)). KaiB(fs) binds phospho-KaiC, KaiA and CikA. KaiA and CikA compete for binding to KaiB(fs), and KaiB(fs) and SasA compete for binding to KaiC, thus the clock oscillator and output signal pathway are tightly coupled. The chain is Circadian clock oscillator protein KaiB from Gloeothece citriformis (strain PCC 7424) (Cyanothece sp. (strain PCC 7424)).